The primary structure comprises 595 residues: Acriflavine sensitivity control protein acr-2 (595 aa).

Residues cysteine 22–cysteine 49 constitute a DNA-binding region (zn(2)-C6 fungal-type). The span at threonine 69–threonine 88 shows a compositional bias: low complexity. A disordered region spans residues threonine 69–glutamine 172. The segment covering valine 89–proline 117 has biased composition (polar residues). Residues serine 118–threonine 138 are compositionally biased toward low complexity.

The protein resides in the nucleus. In terms of biological role, probable transcriptional regulator. In Neurospora crassa (strain ATCC 24698 / 74-OR23-1A / CBS 708.71 / DSM 1257 / FGSC 987), this protein is Acriflavine sensitivity control protein acr-2 (acr-2).